We begin with the raw amino-acid sequence, 677 residues long: UPF0652 protein (677 aa).

The B box-type; atypical zinc finger occupies 38 to 84 (ETPGMCCECTDQPAEVVCLQCQDELCTVCSTSLHRRGSRRSHIFKNK). 4 residues coordinate Zn(2+): C43, C46, C66, and H71. Positions 91-111 (YDELNKRDRQPPLHGKEDEKV) are enriched in basic and acidic residues. Disordered stretches follow at residues 91 to 142 (YDEL…NNNI) and 156 to 192 (LNPL…IDED). Over residues 113–126 (NNNNNNNNTNNTNN) the composition is skewed to low complexity. A compositionally biased stretch (polar residues) spans 163-178 (HTNQQRNGGGSNNHQI).

Belongs to the UPF0652 family.

This chain is UPF0652 protein, found in Dictyostelium discoideum (Social amoeba).